We begin with the raw amino-acid sequence, 134 residues long: Holo-[acyl-carrier-protein] synthase (134 aa).

Residues aspartate 8 and glutamate 57 each contribute to the Mg(2+) site.

The protein belongs to the P-Pant transferase superfamily. AcpS family. Requires Mg(2+) as cofactor.

The protein resides in the cytoplasm. The enzyme catalyses apo-[ACP] + CoA = holo-[ACP] + adenosine 3',5'-bisphosphate + H(+). Functionally, transfers the 4'-phosphopantetheine moiety from coenzyme A to a Ser of acyl-carrier-protein. The protein is Holo-[acyl-carrier-protein] synthase of Rhizobium rhizogenes (strain K84 / ATCC BAA-868) (Agrobacterium radiobacter).